The sequence spans 443 residues: ATP-dependent protease ATPase subunit HslU (443 aa).

Residues Ile-18, 60–65, Asp-256, Glu-321, and Arg-393 contribute to the ATP site; that span reads GVGKTE.

The protein belongs to the ClpX chaperone family. HslU subfamily. In terms of assembly, a double ring-shaped homohexamer of HslV is capped on each side by a ring-shaped HslU homohexamer. The assembly of the HslU/HslV complex is dependent on binding of ATP.

The protein localises to the cytoplasm. ATPase subunit of a proteasome-like degradation complex; this subunit has chaperone activity. The binding of ATP and its subsequent hydrolysis by HslU are essential for unfolding of protein substrates subsequently hydrolyzed by HslV. HslU recognizes the N-terminal part of its protein substrates and unfolds these before they are guided to HslV for hydrolysis. In Vibrio parahaemolyticus serotype O3:K6 (strain RIMD 2210633), this protein is ATP-dependent protease ATPase subunit HslU.